The chain runs to 158 residues: Regulator of G-protein signaling 13 (158 aa).

Residues 34–150 (SLESLMATKY…LKSEMYQQLL (117 aa)) enclose the RGS domain.

Its function is as follows. Inhibits signal transduction by increasing the GTPase activity of G protein alpha subunits thereby driving them into their inactive GDP-bound form. Binds to both G(i)-alpha and G(q)-alpha. The sequence is that of Regulator of G-protein signaling 13 (Rgs13) from Mus musculus (Mouse).